We begin with the raw amino-acid sequence, 84 residues long: Xenoxin-1 (84 aa).

The signal sequence occupies residues 1 to 18 (MRYAIVFFLVCVITLGEA). Disulfide bonds link C21/C42, C35/C55, C61/C76, and C77/C82.

As to expression, expressed by the skin dorsal glands.

It is found in the secreted. Functionally, lacks alpha-neurotoxic activity, has apparently no antibacterial activity, nor anti-coagulant potency. The polypeptide is Xenoxin-1 (xenoxin-1) (Xenopus laevis (African clawed frog)).